Here is a 431-residue protein sequence, read N- to C-terminus: Citrate synthase 1 (431 aa).

Active-site residues include His-309 and Asp-366.

It belongs to the citrate synthase family. In terms of assembly, homohexamer.

It carries out the reaction oxaloacetate + acetyl-CoA + H2O = citrate + CoA + H(+). Its pathway is carbohydrate metabolism; tricarboxylic acid cycle; isocitrate from oxaloacetate: step 1/2. The chain is Citrate synthase 1 (gltA2) from Mycobacterium tuberculosis (strain CDC 1551 / Oshkosh).